A 109-amino-acid polypeptide reads, in one-letter code: Glutaredoxin-C13 (109 aa).

Positions 2–108 constitute a Glutaredoxin domain; it reads AEMVARLASE…PMLKNAGALW (107 aa). Cysteines 22 and 25 form a disulfide. The Responsive for interaction with TGA factors motif lies at 106–109; it reads ALWL.

It belongs to the glutaredoxin family. CC-type subfamily.

The protein resides in the cytoplasm. Its subcellular location is the nucleus. Functionally, has a glutathione-disulfide oxidoreductase activity in the presence of NADPH and glutathione reductase. Reduces low molecular weight disulfides and proteins. In Oryza sativa subsp. japonica (Rice), this protein is Glutaredoxin-C13 (GRXC13).